The primary structure comprises 356 residues: uncharacterized protein (356 aa).

A signal peptide spans 1 to 21 (MKLITAPCRALLALPFCYAFS).

This is an uncharacterized protein from Escherichia coli (strain K12).